The following is a 274-amino-acid chain: tRNA-cytidine(32) 2-sulfurtransferase (274 aa).

Positions 40–45 (SGGKDS) match the PP-loop motif motif. [4Fe-4S] cluster is bound by residues cysteine 115, cysteine 118, and cysteine 206.

The protein belongs to the TtcA family. Homodimer. It depends on Mg(2+) as a cofactor. The cofactor is [4Fe-4S] cluster.

Its subcellular location is the cytoplasm. It catalyses the reaction cytidine(32) in tRNA + S-sulfanyl-L-cysteinyl-[cysteine desulfurase] + AH2 + ATP = 2-thiocytidine(32) in tRNA + L-cysteinyl-[cysteine desulfurase] + A + AMP + diphosphate + H(+). Its pathway is tRNA modification. Catalyzes the ATP-dependent 2-thiolation of cytidine in position 32 of tRNA, to form 2-thiocytidine (s(2)C32). The sulfur atoms are provided by the cysteine/cysteine desulfurase (IscS) system. In Pseudomonas putida (strain ATCC 700007 / DSM 6899 / JCM 31910 / BCRC 17059 / LMG 24140 / F1), this protein is tRNA-cytidine(32) 2-sulfurtransferase.